The following is a 556-amino-acid chain: Non-structural maintenance of chromosome element 5 (556 aa).

As to quaternary structure, component of the Smc5-Smc6 complex which consists of KRE29, MMS21, NSE1, NSE3, NSE4, NSE5, SMC5 and SMC6. Interacts with KRE29.

The protein resides in the nucleus. Its subcellular location is the chromosome. In terms of biological role, acts in a DNA repair pathway for removal of UV-induced DNA damage that is distinct from classical nucleotide excision repair and in repair of ionizing radiation damage. Functions in homologous recombination repair of DNA double strand breaks and in recovery of stalled replication forks. This Saccharomyces cerevisiae (strain ATCC 204508 / S288c) (Baker's yeast) protein is Non-structural maintenance of chromosome element 5 (NSE5).